The sequence spans 209 residues: MFISFEGIDGAGKSTIIKKLKRKLPKLYPDKKFVFTREPGGKKLKEAEKIRKILLDKKTNIDPMTETLLYAASRRVHLDSLIWPALKKGHIVISDRYVDSSYVYQGIARGLGVKVVKEINDIATSNFMPDYTFFLSISEEESIIRRHKRGKPDRLEMSSKDFFSRAYEGYFKIINSPTMADRFILVNAEENVGTILKNILNEFDKILKK.

An ATP-binding site is contributed by 7-14 (GIDGAGKS).

This sequence belongs to the thymidylate kinase family.

It catalyses the reaction dTMP + ATP = dTDP + ADP. Its function is as follows. Phosphorylation of dTMP to form dTDP in both de novo and salvage pathways of dTTP synthesis. This Mycoplasma mobile (strain ATCC 43663 / 163K / NCTC 11711) (Mesomycoplasma mobile) protein is Thymidylate kinase.